The following is a 581-amino-acid chain: Arginine--tRNA ligase (581 aa).

The short motif at 122-132 (PNVAKPMHVGH) is the 'HIGH' region element.

Belongs to the class-I aminoacyl-tRNA synthetase family. Monomer.

It localises to the cytoplasm. It carries out the reaction tRNA(Arg) + L-arginine + ATP = L-arginyl-tRNA(Arg) + AMP + diphosphate. In Francisella tularensis subsp. holarctica (strain FTNF002-00 / FTA), this protein is Arginine--tRNA ligase.